Here is a 506-residue protein sequence, read N- to C-terminus: AAA-ATPase At4g25835 (506 aa).

A signal peptide spans 1-20; that stretch reads MKEYWTSLASLLGVLAFCQS. 244–251 contributes to the ATP binding site; the sequence is GPPGTGKS. The segment at 462–506 is disordered; that stretch reads GKSRVQNVSLEEQENRAFDSLYAEENGGEEEEIEDNICKSSDDCS. Over residues 487-496 the composition is skewed to acidic residues; sequence NGGEEEEIED. Residues 497-506 are compositionally biased toward basic and acidic residues; that stretch reads NICKSSDDCS.

This sequence belongs to the AAA ATPase family. BCS1 subfamily. Mg(2+) serves as cofactor.

The enzyme catalyses ATP + H2O = ADP + phosphate + H(+). The protein is AAA-ATPase At4g25835 of Arabidopsis thaliana (Mouse-ear cress).